Consider the following 288-residue polypeptide: Elongation factor Ts (288 aa).

Residues 82–85 are involved in Mg(2+) ion dislocation from EF-Tu; it reads TDFV.

The protein belongs to the EF-Ts family.

The protein localises to the cytoplasm. Functionally, associates with the EF-Tu.GDP complex and induces the exchange of GDP to GTP. It remains bound to the aminoacyl-tRNA.EF-Tu.GTP complex up to the GTP hydrolysis stage on the ribosome. This chain is Elongation factor Ts, found in Chlorobium chlorochromatii (strain CaD3).